The following is a 142-amino-acid chain: Large ribosomal subunit protein uL11 (142 aa).

It belongs to the universal ribosomal protein uL11 family. Part of the ribosomal stalk of the 50S ribosomal subunit. Interacts with L10 and the large rRNA to form the base of the stalk. L10 forms an elongated spine to which L12 dimers bind in a sequential fashion forming a multimeric L10(L12)X complex. One or more lysine residues are methylated.

Forms part of the ribosomal stalk which helps the ribosome interact with GTP-bound translation factors. This is Large ribosomal subunit protein uL11 from Nocardioides sp. (strain ATCC BAA-499 / JS614).